We begin with the raw amino-acid sequence, 124 residues long: Large ribosomal subunit protein bL12 (124 aa).

It belongs to the bacterial ribosomal protein bL12 family. In terms of assembly, homodimer. Part of the ribosomal stalk of the 50S ribosomal subunit. Forms a multimeric L10(L12)X complex, where L10 forms an elongated spine to which 2 to 4 L12 dimers bind in a sequential fashion. Binds GTP-bound translation factors.

Its function is as follows. Forms part of the ribosomal stalk which helps the ribosome interact with GTP-bound translation factors. Is thus essential for accurate translation. The protein is Large ribosomal subunit protein bL12 of Phocaeicola vulgatus (strain ATCC 8482 / DSM 1447 / JCM 5826 / CCUG 4940 / NBRC 14291 / NCTC 11154) (Bacteroides vulgatus).